The chain runs to 267 residues: Thiamine thiazole synthase (267 aa).

Residues Ser-41, 60 to 61, Gly-68, Val-132, and 160 to 162 each bind NAD(+); these read ER and HVD. The Fe cation site is built by Asp-162 and His-177. Met-227 serves as a coordination point for NAD(+). Arg-237 contacts glycine.

It belongs to the THI4 family. In terms of assembly, homooctamer; tetramer of dimers. It depends on Fe(2+) as a cofactor.

The enzyme catalyses hydrogen sulfide + glycine + NAD(+) = ADP-5-ethyl-4-methylthiazole-2-carboxylate + nicotinamide + 3 H2O + H(+). Its pathway is cofactor biosynthesis; thiamine diphosphate biosynthesis. Its function is as follows. Involved in the biosynthesis of the thiazole moiety of thiamine. Catalyzes the conversion of NAD and glycine to adenosine diphosphate 5-(2-hydroxyethyl)-4-methylthiazole-2-carboxylate (ADT), an adenylated thiazole intermediate, using free sulfide as a source of sulfur. This Saccharolobus solfataricus (strain ATCC 35092 / DSM 1617 / JCM 11322 / P2) (Sulfolobus solfataricus) protein is Thiamine thiazole synthase.